The chain runs to 103 residues: MSATPEEDKKPDQGAHINLKVKGQDGNEVFFRIKRSTQLKKLMNAYCDRQSVDFNSIAFLFDGRRLRAEQTPDELEMEDGDEIDAMLHQTGGGAKNGLKLFCF.

The Ubiquitin-like domain occupies 15–92 (AHINLKVKGQ…IDAMLHQTGG (78 aa)). Glycine 92 is covalently cross-linked (Glycyl lysine isopeptide (Gly-Lys) (interchain with K-? in acceptor proteins)).

Belongs to the ubiquitin family. SUMO subfamily. In terms of assembly, interacts with SAE2, SCE1, SIZ1 and MMS21. Interacts with HSFA2. Covalently attached to ABI5, FLD, GTE3, HSFA2 and ICE1.

Its subcellular location is the nucleus. It localises to the cytoplasm. In terms of biological role, ubiquitin-like protein which can be covalently attached to target lysines as a monomer. Does not seem to be involved in protein degradation and may function as an antagonist of ubiquitin in the degradation process. Required for the massive protein sumoylation in the nucleus induced by heat shock and controlled by SIZ1. The sequence is that of Small ubiquitin-related modifier 2 from Arabidopsis thaliana (Mouse-ear cress).